The sequence spans 130 residues: Small ribosomal subunit protein uS8 (130 aa).

Belongs to the universal ribosomal protein uS8 family. As to quaternary structure, part of the 30S ribosomal subunit. Contacts proteins S5 and S12.

Its function is as follows. One of the primary rRNA binding proteins, it binds directly to 16S rRNA central domain where it helps coordinate assembly of the platform of the 30S subunit. This is Small ribosomal subunit protein uS8 from Shewanella loihica (strain ATCC BAA-1088 / PV-4).